We begin with the raw amino-acid sequence, 191 residues long: MALRDSFNKIISYFDTDEVSEVEEPAVASVKRQQDAAQPASQQQKAQSHQYHQSASRPSQQQVQSGQNRRSGEENIHSLPTRRQSHNQQPAQEKTTIALKLPRKYEDAEEIVDLLIRNECVLIDFQYMLEAQARRCLDFIDGASKVLAGNLQKVGASMYLLTPINVIVDAEEMTLAANGQDVSFNYDMKRR.

Residues 21–96 are disordered; that stretch reads EVEEPAVASV…NQQPAQEKTT (76 aa). Residues 25 to 56 are compositionally biased toward low complexity; it reads PAVASVKRQQDAAQPASQQQKAQSHQYHQSAS. 2 stretches are compositionally biased toward polar residues: residues 57-69 and 86-95; these read RPSQ…GQNR and HNQQPAQEKT.

The protein belongs to the SepF family. As to quaternary structure, homodimer. Interacts with FtsZ.

It is found in the cytoplasm. In terms of biological role, cell division protein that is part of the divisome complex and is recruited early to the Z-ring. Probably stimulates Z-ring formation, perhaps through the cross-linking of FtsZ protofilaments. Its function overlaps with FtsA. The polypeptide is Cell division protein SepF (Streptococcus mutans serotype c (strain ATCC 700610 / UA159)).